We begin with the raw amino-acid sequence, 180 residues long: Large ribosomal subunit protein uL5 (180 aa).

It belongs to the universal ribosomal protein uL5 family. As to quaternary structure, part of the 50S ribosomal subunit; part of the 5S rRNA/L5/L18/L25 subcomplex. Contacts the 5S rRNA and the P site tRNA. Forms a bridge to the 30S subunit in the 70S ribosome.

Its function is as follows. This is one of the proteins that bind and probably mediate the attachment of the 5S RNA into the large ribosomal subunit, where it forms part of the central protuberance. In the 70S ribosome it contacts protein S13 of the 30S subunit (bridge B1b), connecting the 2 subunits; this bridge is implicated in subunit movement. Contacts the P site tRNA; the 5S rRNA and some of its associated proteins might help stabilize positioning of ribosome-bound tRNAs. This is Large ribosomal subunit protein uL5 from Symbiobacterium thermophilum (strain DSM 24528 / JCM 14929 / IAM 14863 / T).